Here is a 412-residue protein sequence, read N- to C-terminus: Translation initiation factor 2 subunit gamma (412 aa).

Residues 7 to 203 (QPEVNIGLVG…AIESEIPTPD (197 aa)) form the tr-type G domain. Positions 16–23 (GHVDHGKT) are G1. Mg(2+) contacts are provided by D19, T23, G44, and S46. A GTP-binding site is contributed by 19-24 (DHGKTT). The segment at 44–48 (GISIR) is G2. The interval 90-93 (DAPG) is G3. GTP-binding positions include 146-149 (NKVD) and 181-183 (SAQ). A G4 region spans residues 146 to 149 (NKVD). The G5 stretch occupies residues 181 to 183 (SAQ).

This sequence belongs to the TRAFAC class translation factor GTPase superfamily. Classic translation factor GTPase family. EIF2G subfamily. In terms of assembly, heterotrimer composed of an alpha, a beta and a gamma chain. Requires Mg(2+) as cofactor.

It catalyses the reaction GTP + H2O = GDP + phosphate + H(+). EIF-2 functions in the early steps of protein synthesis by forming a ternary complex with GTP and initiator tRNA. This chain is Translation initiation factor 2 subunit gamma, found in Halorubrum lacusprofundi (strain ATCC 49239 / DSM 5036 / JCM 8891 / ACAM 34).